A 138-amino-acid polypeptide reads, in one-letter code: Putative membrane protein ORF6 (138 aa).

The next 2 helical transmembrane spans lie at 4–20 (LTII…HAVL) and 37–53 (VVVL…LMTI).

Its subcellular location is the membrane. This is Putative membrane protein ORF6 (ORF6) from Ictalurid herpesvirus 1 (strain Auburn) (IcHV-1).